A 355-amino-acid polypeptide reads, in one-letter code: Probable butyrate kinase (355 aa).

It belongs to the acetokinase family.

It localises to the cytoplasm. It carries out the reaction butanoate + ATP = butanoyl phosphate + ADP. This chain is Probable butyrate kinase, found in Clostridium botulinum (strain Alaska E43 / Type E3).